A 481-amino-acid chain; its full sequence is GTPase Der (481 aa).

2 consecutive EngA-type G domains span residues 3–166 (PVVA…ESDF) and 194–367 (IKLA…MSAT). Residues 9-16 (GRPNVGKS), 56-60 (DTGGI), 118-121 (NKVD), 200-207 (GKPNVGKS), 247-251 (DTAGV), and 312-315 (NKWD) contribute to the GTP site. The 85-residue stretch at 368 to 452 (KRINTALLTQ…PIKIEFREGN (85 aa)) folds into the KH-like domain.

Belongs to the TRAFAC class TrmE-Era-EngA-EngB-Septin-like GTPase superfamily. EngA (Der) GTPase family. Associates with the 50S ribosomal subunit.

In terms of biological role, GTPase that plays an essential role in the late steps of ribosome biogenesis. This is GTPase Der from Alteromonas mediterranea (strain DSM 17117 / CIP 110805 / LMG 28347 / Deep ecotype).